The primary structure comprises 451 residues: CBL-interacting protein kinase 22 (451 aa).

The Protein kinase domain maps to 26-301 (YELGRVLGQG…IGEIFDHPWL (276 aa)). ATP-binding positions include 32-40 (LGQGASSKV) and Lys55. Asp165 acts as the Proton acceptor in catalysis. The segment at 183–216 (DFGLSAFADADQHLGATDGLAATHCGSPAYVAPE) is activation loop. The NAF domain occupies 330–356 (ELEQAMELNAFDIIGFASGCDLSGLIG). The PPI stretch occupies residues 361–389 (RVRFVLPGGDSKSVLDKVEKLGREEGLVV).

Belongs to the protein kinase superfamily. CAMK Ser/Thr protein kinase family. SNF1 subfamily. Mn(2+) serves as cofactor.

It carries out the reaction L-seryl-[protein] + ATP = O-phospho-L-seryl-[protein] + ADP + H(+). It catalyses the reaction L-threonyl-[protein] + ATP = O-phospho-L-threonyl-[protein] + ADP + H(+). Its function is as follows. CIPK serine-threonine protein kinases interact with CBL proteins. Binding of a CBL protein to the regulatory NAF domain of CIPK protein lead to the activation of the kinase in a calcium-dependent manner. The protein is CBL-interacting protein kinase 22 (CIPK22) of Oryza sativa subsp. japonica (Rice).